Here is a 411-residue protein sequence, read N- to C-terminus: 2,3-bisphosphoglycerate-independent phosphoglycerate mutase (411 aa).

The protein belongs to the BPG-independent phosphoglycerate mutase family. A-PGAM subfamily.

It catalyses the reaction (2R)-2-phosphoglycerate = (2R)-3-phosphoglycerate. Its pathway is carbohydrate degradation; glycolysis; pyruvate from D-glyceraldehyde 3-phosphate: step 3/5. In terms of biological role, catalyzes the interconversion of 2-phosphoglycerate and 3-phosphoglycerate. This Methanosphaerula palustris (strain ATCC BAA-1556 / DSM 19958 / E1-9c) protein is 2,3-bisphosphoglycerate-independent phosphoglycerate mutase.